Here is a 360-residue protein sequence, read N- to C-terminus: Phospho-N-acetylmuramoyl-pentapeptide-transferase (360 aa).

The next 10 membrane-spanning stretches (helical) occupy residues 21-41, 70-90, 97-117, 134-154, 168-188, 199-219, 236-256, 263-283, 288-308, and 338-358; these read YLTL…FIVG, GTPT…TLLW, YVWA…VDDY, YLWQ…TASS, VVLN…VGSS, GLAI…AYAS, AGEL…FLWF, VFMG…VAVL, IVLM…MLQV, and VIVR…ATLK.

This sequence belongs to the glycosyltransferase 4 family. MraY subfamily. Mg(2+) serves as cofactor.

It localises to the cell inner membrane. The enzyme catalyses UDP-N-acetyl-alpha-D-muramoyl-L-alanyl-gamma-D-glutamyl-meso-2,6-diaminopimeloyl-D-alanyl-D-alanine + di-trans,octa-cis-undecaprenyl phosphate = di-trans,octa-cis-undecaprenyl diphospho-N-acetyl-alpha-D-muramoyl-L-alanyl-D-glutamyl-meso-2,6-diaminopimeloyl-D-alanyl-D-alanine + UMP. It participates in cell wall biogenesis; peptidoglycan biosynthesis. Functionally, catalyzes the initial step of the lipid cycle reactions in the biosynthesis of the cell wall peptidoglycan: transfers peptidoglycan precursor phospho-MurNAc-pentapeptide from UDP-MurNAc-pentapeptide onto the lipid carrier undecaprenyl phosphate, yielding undecaprenyl-pyrophosphoryl-MurNAc-pentapeptide, known as lipid I. In Methylococcus capsulatus (strain ATCC 33009 / NCIMB 11132 / Bath), this protein is Phospho-N-acetylmuramoyl-pentapeptide-transferase.